A 209-amino-acid chain; its full sequence is MTQKKHSPSSTRWLKEHFDDQYVKKAQKLGLRSRAVFKIDEIQGKDKLLKPGMTVVDLGAAPGGWSQFAIDQVGDKGRVIACDILPMDSIAGVDFLQGDFREETVLGALLERVGPDKVDVVMSDMAPNMSGTQQVDQARSMYLVELALDMCNQVLRANGSFVVKVFQGEGFDIYLNEIRKLFTAVKIRKPDSSRARSREVYIVATGFKL.

The S-adenosyl-L-methionine site is built by G63, W65, D83, D99, and D124. Residue K164 is the Proton acceptor of the active site.

It belongs to the class I-like SAM-binding methyltransferase superfamily. RNA methyltransferase RlmE family.

The protein resides in the cytoplasm. The enzyme catalyses uridine(2552) in 23S rRNA + S-adenosyl-L-methionine = 2'-O-methyluridine(2552) in 23S rRNA + S-adenosyl-L-homocysteine + H(+). Functionally, specifically methylates the uridine in position 2552 of 23S rRNA at the 2'-O position of the ribose in the fully assembled 50S ribosomal subunit. This Aeromonas hydrophila subsp. hydrophila (strain ATCC 7966 / DSM 30187 / BCRC 13018 / CCUG 14551 / JCM 1027 / KCTC 2358 / NCIMB 9240 / NCTC 8049) protein is Ribosomal RNA large subunit methyltransferase E.